Consider the following 130-residue polypeptide: Glycoprotein hormone beta-5 (130 aa).

The first 24 residues, 1–24, serve as a signal peptide directing secretion; sequence MKLVYLVLGAVALLLLGGPDSVLS. 5 disulfide bridges follow: C36-C84, C50-C99, C60-C115, C64-C117, and C120-C127. The N-linked (GlcNAc...) asparagine glycan is linked to N87.

It belongs to the glycoprotein hormones subunit beta family. In terms of assembly, heterodimer with GPHA2; this heterodimer interacts with thyroid-stimulating hormone receptor (TSHR), and hence stimulates cAMP production. Post-translationally, N-glycosylated. As to expression, expressed in the anterior lobe of pituitary.

The protein localises to the secreted. Functions as a heterodimeric glycoprotein hormone with GPHA2 able to bind and activate the thyroid-stimulating hormone receptor (TSHR), leading to increased cAMP production. Plays a central role in controlling thyroid cell metabolism. The sequence is that of Glycoprotein hormone beta-5 (Gphb5) from Mus musculus (Mouse).